A 210-amino-acid chain; its full sequence is MARTPSSDRPERGRGGERGDRPNRGRGGAEQTPREREESEFVDKLVHINRVAKVVKGGRRFAFAALVVVGDAKGRVGCGSGKAREVPEAIRKATEQAKRNMIKIALREGRTLHHDAYGHFGAGRVILRAAPAGTGIIAGGPMRAVFETMGVQDVVAKCLGTSNPHNMIKATFDALINLASPRHVAAKRGKKVGEIIGRRDGAAAAAAAGV.

Over residues 1-23 (MARTPSSDRPERGRGGERGDRPN) the composition is skewed to basic and acidic residues. The tract at residues 1-40 (MARTPSSDRPERGRGGERGDRPNRGRGGAEQTPREREESE) is disordered. The 64-residue stretch at 41 to 104 (FVDKLVHINR…EQAKRNMIKI (64 aa)) folds into the S5 DRBM domain.

It belongs to the universal ribosomal protein uS5 family. In terms of assembly, part of the 30S ribosomal subunit. Contacts proteins S4 and S8.

With S4 and S12 plays an important role in translational accuracy. Its function is as follows. Located at the back of the 30S subunit body where it stabilizes the conformation of the head with respect to the body. This Paramagnetospirillum magneticum (strain ATCC 700264 / AMB-1) (Magnetospirillum magneticum) protein is Small ribosomal subunit protein uS5.